We begin with the raw amino-acid sequence, 439 residues long: Methionine aminopeptidase 2-2 (439 aa).

Positions 1–90 are disordered; that stretch reads MAAQAPPTDE…SQLFPDKQYP (90 aa). Over residues 10-23 the composition is skewed to basic and acidic residues; the sequence is ELSKLSVEDADNKP. Over residues 35-45 the composition is skewed to acidic residues; it reads DEDDSEDDAED. Over residues 54-68 the composition is skewed to basic residues; it reads AKKKKKRKPRKKKKN. H192 is a substrate binding site. The a divalent metal cation site is built by D212, D223, and H292. H300 provides a ligand contact to substrate. The a divalent metal cation site is built by E325 and E420.

This sequence belongs to the peptidase M24A family. Methionine aminopeptidase eukaryotic type 2 subfamily. The cofactor is Co(2+). Requires Zn(2+) as cofactor. Mn(2+) serves as cofactor. It depends on Fe(2+) as a cofactor.

The protein localises to the cytoplasm. It catalyses the reaction Release of N-terminal amino acids, preferentially methionine, from peptides and arylamides.. Functionally, cotranslationally removes the N-terminal methionine from nascent proteins. The N-terminal methionine is often cleaved when the second residue in the primary sequence is small and uncharged (Met-Ala-, Cys, Gly, Pro, Ser, Thr, or Val). This is Methionine aminopeptidase 2-2 from Chaetomium globosum (strain ATCC 6205 / CBS 148.51 / DSM 1962 / NBRC 6347 / NRRL 1970) (Soil fungus).